Consider the following 103-residue polypeptide: Small ribosomal subunit protein uS10 (103 aa).

Belongs to the universal ribosomal protein uS10 family. In terms of assembly, part of the 30S ribosomal subunit.

Involved in the binding of tRNA to the ribosomes. The sequence is that of Small ribosomal subunit protein uS10 from Ruthia magnifica subsp. Calyptogena magnifica.